The sequence spans 132 residues: Ribosome-binding factor A (132 aa).

The protein belongs to the RbfA family. As to quaternary structure, monomer. Binds 30S ribosomal subunits, but not 50S ribosomal subunits or 70S ribosomes.

It localises to the cytoplasm. Functionally, one of several proteins that assist in the late maturation steps of the functional core of the 30S ribosomal subunit. Associates with free 30S ribosomal subunits (but not with 30S subunits that are part of 70S ribosomes or polysomes). Required for efficient processing of 16S rRNA. May interact with the 5'-terminal helix region of 16S rRNA. This Pseudomonas putida (strain GB-1) protein is Ribosome-binding factor A.